An 83-amino-acid polypeptide reads, in one-letter code: MVADPTTTLQVKNTGSLSVNRYGWINIWMAILGQFFTLFPLFFESCLILLKTWLEIFPDNAGILRIYLLQFSAIVGYKTRRAA.

The protein belongs to the YqgD family.

This Escherichia coli (strain K12) protein is Protein YqgD (yqgD).